A 554-amino-acid chain; its full sequence is Glutamine--tRNA ligase (554 aa).

A 'HIGH' region motif is present at residues 33 to 43 (PEPNGYLHIGH). ATP-binding positions include 34 to 36 (EPN) and 40 to 46 (HIGHAKS). Residues aspartate 66 and tyrosine 210 each coordinate L-glutamine. ATP-binding positions include threonine 229, 259-260 (RL), and 267-269 (MSK). Positions 266 to 270 (VMSKR) match the 'KMSKS' region motif.

It belongs to the class-I aminoacyl-tRNA synthetase family. As to quaternary structure, monomer.

It is found in the cytoplasm. It catalyses the reaction tRNA(Gln) + L-glutamine + ATP = L-glutaminyl-tRNA(Gln) + AMP + diphosphate. The polypeptide is Glutamine--tRNA ligase (Clostridioides difficile (strain 630) (Peptoclostridium difficile)).